Reading from the N-terminus, the 96-residue chain is MKCFAQIVVLLLVIAFSHGAVITGVCDRDAQCGSGTCCAASAFSRNIRFCVPLGNNGEECHPASHKVPYNGKRLSSLCPCNTGLTCPKSGEKFQCS.

The N-terminal stretch at 1–19 (MKCFAQIVVLLLVIAFSHG) is a signal peptide. Cystine bridges form between Cys26–Cys38, Cys32–Cys50, Cys37–Cys78, Cys60–Cys86, and Cys80–Cys95.

It belongs to the AVIT (prokineticin) family. In terms of tissue distribution, expressed by the skin glands.

It is found in the secreted. Functionally, potent agonist for both PKR1/PROKR1 and PKR2/PROKR2, and inducer of a potent and long-lasting hyperalgesia. Also potentiates capsaicin-induced TRPV1 current, when tested on DRG neurons. At subnanomolar concentrations, this protein both induces potent chemotaxis of macrophages and stimulates LPS-induced production of the pro-inflammatory cytokines IL-1 and IL-12. In vivo, potently stimulates the contraction of the guinea-pig gastrointestinal (GI) smooth muscle (nanomolar concentration). This is Prokineticin Bm8-e from Bombina maxima (Giant fire-bellied toad).